Here is a 383-residue protein sequence, read N- to C-terminus: Protein dyf-4 (383 aa).

A signal peptide spans 1-16 (MKTIWLLLATCIHVFA). N-linked (GlcNAc...) asparagine glycosylation occurs at Asn64.

In terms of assembly, interacts with daf-6. As to expression, expressed in sheath and socket glial cells in both the amphid and phasmid ciliated sensory neurons (at protein level).

The protein resides in the secreted. In terms of biological role, required for the localization of daf-6 to the socket glial channel and the sheath lumen. In association with daf-6, plays a role in dendrite extension and ciliogenesis to ensure the formation of glial channels in amphid and phasmid ciliated sensory neurons. This chain is Protein dyf-4, found in Caenorhabditis elegans.